The chain runs to 444 residues: Glycerol-3-phosphate transporter (444 aa).

Residues 1–36 are Cytoplasmic-facing; it reads MLNIFKPAPHIERLDDSKMDAAYKRLRLQVFIGIFI. Residues 37-57 form a helical membrane-spanning segment; that stretch reads GYAGYYLLRKNFAFAIPYLQE. At 58-63 the chain is on the extracellular side; the sequence is QGFSKT. Residues 64–84 form a helical membrane-spanning segment; sequence ELGLVLAAVSIAYGFSKFIMG. Over 85 to 93 the chain is Cytoplasmic; sequence MVSDRCNPR. Residues 94 to 112 traverse the membrane as a helical segment; the sequence is YFLATGLFLSAIVNILFVS. The Extracellular portion of the chain corresponds to 113–120; that stretch reads MPWVTSSV. A helical transmembrane segment spans residues 121-141; that stretch reads TIMFIFMFINGWFQGMGWPPC. At 142-160 the chain is on the cytoplasmic side; it reads GRTMAHWFSISERGTKMSI. Residues 161–180 form a helical membrane-spanning segment; that stretch reads WNVAHNIGGGILAPLVTLGI. At 181–189 the chain is on the extracellular side; sequence AMFVTWKSV. The helical transmembrane segment at 190 to 207 threads the bilayer; sequence FFFPAIIAIIISFLIVLL. At 208 to 261 the chain is on the cytoplasmic side; the sequence is VRDTPQSCGLPPIEEYRNDYPKHAFKNQEKELTTKEILFQYVLNNKFLWYIAFA. Residues 262-282 traverse the membrane as a helical segment; it reads NVFVYFVRYGVVDWAPTYLTE. Over 283-287 the chain is Extracellular; that stretch reads AKGFS. A helical membrane pass occupies residues 288–308; that stretch reads PEDSRWSYFLYEYAGIPGTIL. At 309 to 321 the chain is on the cytoplasmic side; that stretch reads CGWISDRFFKSRR. A helical transmembrane segment spans residues 322–341; sequence APAGVLFMAGVFIAVLVYWL. At 342-346 the chain is on the extracellular side; sequence NPAGN. Residues 347-368 traverse the membrane as a helical segment; the sequence is PLVDNIALISIGFLIYGPVMLI. Over 369–387 the chain is Cytoplasmic; sequence GLQAIDLAPKKAAGTAAGL. The helical transmembrane segment at 388–409 threads the bilayer; the sequence is TGFFGYIGGSAFANAIMGFVVD. Residues 410 to 414 lie on the Extracellular side of the membrane; the sequence is RFNWN. A helical membrane pass occupies residues 415–435; it reads GGFIMLISSCILAIVFLALTW. The Cytoplasmic segment spans residues 436 to 444; it reads NTGKRAEHV.

Belongs to the major facilitator superfamily. Organophosphate:Pi antiporter (OPA) (TC 2.A.1.4) family.

The protein resides in the cell membrane. Functionally, responsible for glycerol-3-phosphate uptake. This Bacillus subtilis (strain 168) protein is Glycerol-3-phosphate transporter (glpT).